Consider the following 68-residue polypeptide: Large ribosomal subunit protein bL35 (68 aa).

The protein belongs to the bacterial ribosomal protein bL35 family.

The protein is Large ribosomal subunit protein bL35 of Aster yellows witches'-broom phytoplasma (strain AYWB).